The primary structure comprises 99 residues: UPF0386 protein mll0189 (99 aa).

It belongs to the UPF0386 family.

In Mesorhizobium japonicum (strain LMG 29417 / CECT 9101 / MAFF 303099) (Mesorhizobium loti (strain MAFF 303099)), this protein is UPF0386 protein mll0189.